Reading from the N-terminus, the 455-residue chain is tRNA modification GTPase MnmE (455 aa).

R24, E81, and K121 together coordinate (6S)-5-formyl-5,6,7,8-tetrahydrofolate. The TrmE-type G domain maps to 217-378 (GMKVVIAGRP…LKEHLKDIMG (162 aa)). N227 contacts K(+). Residues 227-232 (NAGKSS), 246-252 (TDIAGTT), 271-274 (DTAG), and 336-339 (NKAD) each bind GTP. S231 lines the Mg(2+) pocket. Residues T246, I248, and T251 each contribute to the K(+) site. T252 lines the Mg(2+) pocket. K455 lines the (6S)-5-formyl-5,6,7,8-tetrahydrofolate pocket.

It belongs to the TRAFAC class TrmE-Era-EngA-EngB-Septin-like GTPase superfamily. TrmE GTPase family. In terms of assembly, homodimer. Heterotetramer of two MnmE and two MnmG subunits. Requires K(+) as cofactor.

The protein localises to the cytoplasm. Functionally, exhibits a very high intrinsic GTPase hydrolysis rate. Involved in the addition of a carboxymethylaminomethyl (cmnm) group at the wobble position (U34) of certain tRNAs, forming tRNA-cmnm(5)s(2)U34. This Psychromonas ingrahamii (strain DSM 17664 / CCUG 51855 / 37) protein is tRNA modification GTPase MnmE.